We begin with the raw amino-acid sequence, 211 residues long: Octanoyltransferase (211 aa).

The 176-residue stretch at 28 to 203 (GSAPETLLLV…HFQSLLKTWL (176 aa)) folds into the BPL/LPL catalytic domain. Residues 66–73 (RGGDITYH), 133–135 (SIG), and 146–148 (GFA) contribute to the substrate site. The Acyl-thioester intermediate role is filled by Cys164.

Belongs to the LipB family.

It is found in the cytoplasm. The catalysed reaction is octanoyl-[ACP] + L-lysyl-[protein] = N(6)-octanoyl-L-lysyl-[protein] + holo-[ACP] + H(+). The protein operates within protein modification; protein lipoylation via endogenous pathway; protein N(6)-(lipoyl)lysine from octanoyl-[acyl-carrier-protein]: step 1/2. Functionally, catalyzes the transfer of endogenously produced octanoic acid from octanoyl-acyl-carrier-protein onto the lipoyl domains of lipoate-dependent enzymes. Lipoyl-ACP can also act as a substrate although octanoyl-ACP is likely to be the physiological substrate. In Syntrophotalea carbinolica (strain DSM 2380 / NBRC 103641 / GraBd1) (Pelobacter carbinolicus), this protein is Octanoyltransferase.